Here is a 579-residue protein sequence, read N- to C-terminus: Altered inheritance of mitochondria protein 9, mitochondrial (579 aa).

The transit peptide at 1–36 directs the protein to the mitochondrion; it reads MQSWNSQSFLSSHFTMLRYACKRAVPRLNAASGLRF.

This sequence belongs to the AIM9 family.

Its subcellular location is the mitochondrion. The chain is Altered inheritance of mitochondria protein 9, mitochondrial (AIM9) from Yarrowia lipolytica (strain CLIB 122 / E 150) (Yeast).